Reading from the N-terminus, the 361-residue chain is Phenylalanine--tRNA ligase alpha subunit (361 aa).

A Mg(2+)-binding site is contributed by Glu-260.

It belongs to the class-II aminoacyl-tRNA synthetase family. Phe-tRNA synthetase alpha subunit type 1 subfamily. Tetramer of two alpha and two beta subunits. Requires Mg(2+) as cofactor.

The protein resides in the cytoplasm. It carries out the reaction tRNA(Phe) + L-phenylalanine + ATP = L-phenylalanyl-tRNA(Phe) + AMP + diphosphate + H(+). This Bartonella quintana (strain Toulouse) (Rochalimaea quintana) protein is Phenylalanine--tRNA ligase alpha subunit.